Consider the following 149-residue polypeptide: Probable conjugal transfer protein TrbE part 1 (149 aa).

It belongs to the TrbE/VirB4 family.

The chain is Probable conjugal transfer protein TrbE part 1 (trbEA) from Sinorhizobium fredii (strain NBRC 101917 / NGR234).